The following is a 623-amino-acid chain: Protein FAM234B (623 aa).

The tract at residues 1–82 (MATVLSRALK…TSERAPEGYP (82 aa)) is disordered. The helical transmembrane segment at 104 to 124 (AVFLLTVVISMILVLVCAFLI) threads the bilayer.

Belongs to the FAM234 family.

The protein localises to the membrane. Its subcellular location is the golgi outpost. It localises to the cytoplasm. The protein resides in the cytoskeleton. It is found in the microtubule organizing center. This is Protein FAM234B (FAM234B) from Gallus gallus (Chicken).